The primary structure comprises 423 residues: Histidine--tRNA ligase (423 aa).

Belongs to the class-II aminoacyl-tRNA synthetase family. In terms of assembly, homodimer.

It is found in the cytoplasm. It catalyses the reaction tRNA(His) + L-histidine + ATP = L-histidyl-tRNA(His) + AMP + diphosphate + H(+). The sequence is that of Histidine--tRNA ligase from Haemophilus influenzae (strain PittEE).